The primary structure comprises 184 residues: Probable sensory rhodopsin transducer (184 aa).

Helical transmembrane passes span 14–34 (TLGV…VNVY) and 52–72 (GLVS…TIIG). One can recognise an HAMP domain in the interval 73-125 (RERTAAVETLAAQARQIEQGELDVDLATNRTDDVGDIYRALAVLRDSEQLDRQ).

This sequence belongs to the methyl-accepting chemotaxis (MCP) protein family. Interacts with Xop2/SRM.

The protein resides in the membrane. Its function is as follows. The HtrM-Xop2/SRM complex may interact with CheB or CheR and modulate their availability to Sop1 or Sop2. The sequence is that of Probable sensory rhodopsin transducer (htrM) from Haloarcula marismortui (strain ATCC 43049 / DSM 3752 / JCM 8966 / VKM B-1809) (Halobacterium marismortui).